We begin with the raw amino-acid sequence, 207 residues long: Cytidylate kinase (207 aa).

An ATP-binding site is contributed by 7-15 (GVAASGKSS).

It belongs to the cytidylate kinase family. Type 1 subfamily.

It localises to the cytoplasm. The catalysed reaction is CMP + ATP = CDP + ADP. It carries out the reaction dCMP + ATP = dCDP + ADP. The chain is Cytidylate kinase from Deinococcus deserti (strain DSM 17065 / CIP 109153 / LMG 22923 / VCD115).